Here is a 225-residue protein sequence, read N- to C-terminus: Cytochrome c oxidase subunit 2 (225 aa).

The Mitochondrial intermembrane portion of the chain corresponds to 1 to 26 (MMTWSQMSFSDMNSPIMEQMVFFHDH). Residues 27 to 48 (SMMIILMITILTIYMITNIMMN) form a helical membrane-spanning segment. The Mitochondrial matrix segment spans residues 49–62 (NLLSRSMMEGQEIE). A helical transmembrane segment spans residues 63–82 (IIWTIIPAITLIFIAIPSLH). Residues 83 to 225 (LLYLTDETFN…KNFINFINSS (143 aa)) are Mitochondrial intermembrane-facing. Cu cation-binding residues include H160, C195, E197, C199, H203, and M206. Position 197 (E197) interacts with Mg(2+).

This sequence belongs to the cytochrome c oxidase subunit 2 family. In terms of assembly, component of the cytochrome c oxidase (complex IV, CIV), a multisubunit enzyme composed of a catalytic core of 3 subunits and several supernumerary subunits. The complex exists as a monomer or a dimer and forms supercomplexes (SCs) in the inner mitochondrial membrane with ubiquinol-cytochrome c oxidoreductase (cytochrome b-c1 complex, complex III, CIII). The cofactor is Cu cation.

It is found in the mitochondrion inner membrane. The catalysed reaction is 4 Fe(II)-[cytochrome c] + O2 + 8 H(+)(in) = 4 Fe(III)-[cytochrome c] + 2 H2O + 4 H(+)(out). Functionally, component of the cytochrome c oxidase, the last enzyme in the mitochondrial electron transport chain which drives oxidative phosphorylation. The respiratory chain contains 3 multisubunit complexes succinate dehydrogenase (complex II, CII), ubiquinol-cytochrome c oxidoreductase (cytochrome b-c1 complex, complex III, CIII) and cytochrome c oxidase (complex IV, CIV), that cooperate to transfer electrons derived from NADH and succinate to molecular oxygen, creating an electrochemical gradient over the inner membrane that drives transmembrane transport and the ATP synthase. Cytochrome c oxidase is the component of the respiratory chain that catalyzes the reduction of oxygen to water. Electrons originating from reduced cytochrome c in the intermembrane space (IMS) are transferred via the dinuclear copper A center (CU(A)) of subunit 2 and heme A of subunit 1 to the active site in subunit 1, a binuclear center (BNC) formed by heme A3 and copper B (CU(B)). The BNC reduces molecular oxygen to 2 water molecules using 4 electrons from cytochrome c in the IMS and 4 protons from the mitochondrial matrix. The chain is Cytochrome c oxidase subunit 2 (COII) from Rhipicephalus sanguineus (Brown dog tick).